The primary structure comprises 272 residues: Shikimate dehydrogenase (NADP(+)) (272 aa).

Residues Ser-14–Ser-16 and Thr-61 each bind shikimate. Lys-65 functions as the Proton acceptor in the catalytic mechanism. Asp-102 provides a ligand contact to shikimate. NADP(+)-binding positions include Gly-127–Ala-131, Asn-151–Lys-156, and Leu-215. Residue Tyr-217 participates in shikimate binding. Position 239 (Gly-239) interacts with NADP(+).

This sequence belongs to the shikimate dehydrogenase family. Homodimer.

It catalyses the reaction shikimate + NADP(+) = 3-dehydroshikimate + NADPH + H(+). The protein operates within metabolic intermediate biosynthesis; chorismate biosynthesis; chorismate from D-erythrose 4-phosphate and phosphoenolpyruvate: step 4/7. Involved in the biosynthesis of the chorismate, which leads to the biosynthesis of aromatic amino acids. Catalyzes the reversible NADPH linked reduction of 3-dehydroshikimate (DHSA) to yield shikimate (SA). The sequence is that of Shikimate dehydrogenase (NADP(+)) from Coxiella burnetii (strain CbuG_Q212) (Coxiella burnetii (strain Q212)).